The chain runs to 423 residues: Sulfate adenylyltransferase (423 aa).

The sulfate site is built by Gln207 and Arg209. Residues 207–210 (QLRN) and 301–304 (GRDH) each bind ATP. Catalysis depends on residues Arg209 and Asn210. Position 305 (Ala305) interacts with sulfate.

Belongs to the sulfate adenylyltransferase family.

Its subcellular location is the mitosome. The enzyme catalyses sulfate + ATP + H(+) = adenosine 5'-phosphosulfate + diphosphate. It functions in the pathway sulfur metabolism; hydrogen sulfide biosynthesis; sulfite from sulfate: step 1/3. Its function is as follows. Catalyzes the first intracellular reaction of sulfate assimilation, forming adenosine-5'-phosphosulfate (APS) from inorganic sulfate and ATP. This chain is Sulfate adenylyltransferase, found in Entamoeba histolytica (strain ATCC 30459 / HM-1:IMSS / ABRM).